The following is a 483-amino-acid chain: Regulatory protein ViaA (483 aa).

This sequence belongs to the ViaA family. In terms of assembly, homodimer. Interacts with RavA.

It is found in the cytoplasm. Its function is as follows. Component of the RavA-ViaA chaperone complex, which may act on the membrane to optimize the function of some of the respiratory chains. ViaA stimulates the ATPase activity of RavA. The chain is Regulatory protein ViaA from Escherichia coli (strain 55989 / EAEC).